Reading from the N-terminus, the 354-residue chain is Cellular communication network factor 6 (354 aa).

Residues 1-23 (MRRLLFCTLLMTGLTQLCCRTQG) form the signal peptide. Residues 44-117 (RTEVCRWPCR…RYETGVCAYL (74 aa)) enclose the IGFBP N-terminal domain. 13 cysteine pairs are disulfide-bonded: Cys-48–Cys-72, Cys-52–Cys-74, Cys-54–Cys-75, Cys-61–Cys-78, Cys-86–Cys-100, Cys-92–Cys-114, Cys-209–Cys-238, Cys-219–Cys-223, Cys-247–Cys-252, Cys-268–Cys-305, Cys-285–Cys-319, Cys-296–Cys-335, and Cys-299–Cys-337. The TSP type-1 domain occupies 208–253 (KCLVQATKWTPCSRTCGMGISNRVTNDNANCEMRKERRLCYIQPCS). Residues 268 to 342 (CQPTFQLPKA…TSCVCQRDCR (75 aa)) enclose the CTCK domain. An N-linked (GlcNAc...) asparagine glycan is attached at Asn-308.

Belongs to the CCN family.

Its subcellular location is the secreted. The protein resides in the mitochondrion. In terms of biological role, plays a role in mitochondrial electron transport and mitochondrial respiration. This Mus musculus (Mouse) protein is Cellular communication network factor 6.